Here is a 288-residue protein sequence, read N- to C-terminus: Leucine-rich repeat-containing protein 72 (288 aa).

LRR repeat units follow at residues 47–68, 69–90, 91–112, and 113–134; these read DVFELFLSQKELTEVIDLSRFK, KLKYLWLHHNKLHGITFLTRNY, CLAELYLNNNAIFDIEGLHYLP, and SLHILLLHHNELINLDATVKEL. Residues 148-186 form the LRRCT domain; it reads NPLCQYNLYRLYIIYHLPGVELLDRNQVTEKERRSMITL.

The chain is Leucine-rich repeat-containing protein 72 (LRRC72) from Bos taurus (Bovine).